The sequence spans 364 residues: Phosphate acyltransferase (364 aa).

Residues 343–364 are disordered; it reads IRTSGRSGGKSKSSAAREDGAA.

This sequence belongs to the PlsX family. In terms of assembly, homodimer. Probably interacts with PlsY.

The protein resides in the cytoplasm. It carries out the reaction a fatty acyl-[ACP] + phosphate = an acyl phosphate + holo-[ACP]. Its pathway is lipid metabolism; phospholipid metabolism. Its function is as follows. Catalyzes the reversible formation of acyl-phosphate (acyl-PO(4)) from acyl-[acyl-carrier-protein] (acyl-ACP). This enzyme utilizes acyl-ACP as fatty acyl donor, but not acyl-CoA. The chain is Phosphate acyltransferase from Novosphingobium aromaticivorans (strain ATCC 700278 / DSM 12444 / CCUG 56034 / CIP 105152 / NBRC 16084 / F199).